The sequence spans 499 residues: Bifunctional purine biosynthesis protein PurH (499 aa).

The region spanning 1–144 (MIKRALISVF…KNFKDVVVLT (144 aa)) is the MGS-like domain.

This sequence belongs to the PurH family.

The catalysed reaction is (6R)-10-formyltetrahydrofolate + 5-amino-1-(5-phospho-beta-D-ribosyl)imidazole-4-carboxamide = 5-formamido-1-(5-phospho-D-ribosyl)imidazole-4-carboxamide + (6S)-5,6,7,8-tetrahydrofolate. The enzyme catalyses IMP + H2O = 5-formamido-1-(5-phospho-D-ribosyl)imidazole-4-carboxamide. Its pathway is purine metabolism; IMP biosynthesis via de novo pathway; 5-formamido-1-(5-phospho-D-ribosyl)imidazole-4-carboxamide from 5-amino-1-(5-phospho-D-ribosyl)imidazole-4-carboxamide (10-formyl THF route): step 1/1. The protein operates within purine metabolism; IMP biosynthesis via de novo pathway; IMP from 5-formamido-1-(5-phospho-D-ribosyl)imidazole-4-carboxamide: step 1/1. The chain is Bifunctional purine biosynthesis protein PurH from Clostridium botulinum (strain 657 / Type Ba4).